A 700-amino-acid polypeptide reads, in one-letter code: Kin of IRRE-like protein 2 (700 aa).

Residues Met1–Ser19 form the signal peptide. Topologically, residues Ser20–Arg507 are extracellular. 5 Ig-like C2-type domains span residues Pro21–His115, Pro120–Ser219, Pro224–Glu304, Pro309–Thr391, and Pro395–Leu497. The cysteines at positions 42 and 100 are disulfide-linked. N-linked (GlcNAc...) asparagine glycosylation occurs at Asn140. 2 cysteine pairs are disulfide-bonded: Cys143–Cys201 and Cys245–Cys288. The Cell attachment site signature appears at Arg146–Asp148. N-linked (GlcNAc...) asparagine glycosylation occurs at Asn298. 2 cysteine pairs are disulfide-bonded: Cys330–Cys372 and Cys416–Cys482. N-linked (GlcNAc...) asparagine glycosylation occurs at Asn481. The chain crosses the membrane as a helical span at residues Ile508–Leu528. The Cytoplasmic segment spans residues Cys529–Val700. A disordered region spans residues Leu542 to Ser576. Ser563 carries the phosphoserine modification. Residues Ser564 to Ser576 are compositionally biased toward basic and acidic residues. Residues Tyr595, Tyr596, and Tyr653 each carry the phosphotyrosine modification. Residues Phe671 to Val700 form a disordered region. A compositionally biased stretch (polar residues) spans Ser689–Val700.

This sequence belongs to the immunoglobulin superfamily. In terms of assembly, homodimer. Interacts with NPHS2/podocin (via the C-terminus). Interacts with NPHS1 (via the Ig-like domains). Interacts with FYN. N-glycosylated. In terms of processing, phosphorylated at Ser-548 or Ser-549; due to site ambiguity, the exact position of the serine phosphorylation could not be determined. Phosphorylation at residues Tyr-631 and/or Tyr-632. FYN mediates tyrosine phosphorylation in pancreatic beta-cells. Post-translationally, the extracellular domain is cleaved leading to the generation of a soluble fragment and a membrane-bound C-terminal fragment, which is further cleaved by gamma-secretase. In terms of tissue distribution, highly expressed in beta-cells of the pancreatic islets. Expression is seen in podocytes of kidney glomeruli, and in the cerebellum and hindbrain at 12.5 dpc, in the spinal cord at 10.5 dpc, and in retina and hypothalamus at 13.5 dpc.

The protein localises to the cell membrane. Its function is as follows. May regulate basal insulin secretion. In Mus musculus (Mouse), this protein is Kin of IRRE-like protein 2 (Kirrel2).